We begin with the raw amino-acid sequence, 428 residues long: Enolase (428 aa).

Residue Q167 coordinates (2R)-2-phosphoglycerate. Residue E209 is the Proton donor of the active site. The Mg(2+) site is built by D246, E288, and D315. (2R)-2-phosphoglycerate contacts are provided by K340, R369, S370, and K391. Residue K340 is the Proton acceptor of the active site.

This sequence belongs to the enolase family. In terms of assembly, component of the RNA degradosome, a multiprotein complex involved in RNA processing and mRNA degradation. Requires Mg(2+) as cofactor.

The protein localises to the cytoplasm. It localises to the secreted. The protein resides in the cell surface. It catalyses the reaction (2R)-2-phosphoglycerate = phosphoenolpyruvate + H2O. It functions in the pathway carbohydrate degradation; glycolysis; pyruvate from D-glyceraldehyde 3-phosphate: step 4/5. Functionally, catalyzes the reversible conversion of 2-phosphoglycerate (2-PG) into phosphoenolpyruvate (PEP). It is essential for the degradation of carbohydrates via glycolysis. The polypeptide is Enolase (Pseudomonas savastanoi pv. phaseolicola (strain 1448A / Race 6) (Pseudomonas syringae pv. phaseolicola (strain 1448A / Race 6))).